Here is a 34-residue protein sequence, read N- to C-terminus: Photosystem II reaction center protein M (34 aa).

The helical transmembrane segment at 5 to 25 (ILAFIATALFISIPTAFLLIP) threads the bilayer.

The protein belongs to the PsbM family. PSII is composed of 1 copy each of membrane proteins PsbA, PsbB, PsbC, PsbD, PsbE, PsbF, PsbH, PsbI, PsbJ, PsbK, PsbL, PsbM, PsbT, PsbX, PsbY, PsbZ, Psb30/Ycf12, at least 3 peripheral proteins of the oxygen-evolving complex and a large number of cofactors. It forms dimeric complexes.

It localises to the plastid. It is found in the chloroplast thylakoid membrane. Its function is as follows. One of the components of the core complex of photosystem II (PSII). PSII is a light-driven water:plastoquinone oxidoreductase that uses light energy to abstract electrons from H(2)O, generating O(2) and a proton gradient subsequently used for ATP formation. It consists of a core antenna complex that captures photons, and an electron transfer chain that converts photonic excitation into a charge separation. This subunit is found at the monomer-monomer interface. This is Photosystem II reaction center protein M from Psilotum nudum (Whisk fern).